An 860-amino-acid chain; its full sequence is MTKRYFSLLAVCSAIATSTFADDTPTNSLSLGKTYLRCYPQADSNQWDCAEYSSETNLPIGRSQIQQAPNAYDFVSAENLTPAAQSALLPGCTGMYIDPLGDQTNAPSPENTPLIVEADDSVLTGSQKAQLDGNVQISQGARSIRADSMTYSRETEEASLAGGVTIRNPGLLIRGDKASMSTTRNQASFENAIFVLHGQHIRGQADAIRQTSDSSIVLEGGSITSCEPGSNAWSLGGAEIKIDNEKGQGTGKHITLKVGKVPIMYVPYIAFPLGDQRQSGLLFPSISSSDNGGLDAAVPFYWNMAPNYDATITPRIISGRGAMLEVEGRHLNKSFYTESNIAYLPNDDGGQDKDLDTLVSNGDITESQAHPYTGQNRWLGHLSQQGGSASNGGWYSTIDFTKVSDQDYFRDLGASSFSEQNQSYLDQRAELGYLFEHWTVSAMAQNRQVLLYDLDTPYRRAPQLNAIGHYSVNGFEFKLDNELVRFDHPSNEWRNGDTLITGSRLSTDYRAAWPIRGRWGFIKPEVGYKALGYQLESDGLASSAESSPTLGAAQASIDMSVIFEHRGGSIMQTIEPRVYYLHRAYTDHSDLYAVTADGQNVNFDTSIRTFSYSQLFRDSRFGGRDRLDDANQTTVGLTSRWYSNNSGRELFSASIGQVFHNADRRVGLNGEELNTGQTSELAADVSVMLGPLSRFYVNSIYDTEAAEITRASSGVYYHSQDLSTLANLSYSYVRDYRQSSIAAGTTEATDIDQVDLSFVTPINKQWSLMGRYNYDFTQAQELETFLGFEYNDCCYRVRLLARKWLDSNIASLTDNHDLEHDQGVFFEVHFKGLGGSGAKVNSILEDSIRGYQERERRNKQ.

The N-terminal stretch at 1–21 is a signal peptide; that stretch reads MTKRYFSLLAVCSAIATSTFA.

The protein belongs to the LptD family. In terms of assembly, component of the lipopolysaccharide transport and assembly complex. Interacts with LptE and LptA.

It localises to the cell outer membrane. Together with LptE, is involved in the assembly of lipopolysaccharide (LPS) at the surface of the outer membrane. The polypeptide is LPS-assembly protein LptD (Saccharophagus degradans (strain 2-40 / ATCC 43961 / DSM 17024)).